An 82-amino-acid chain; its full sequence is Translation initiation factor IF-1, chloroplastic (82 aa).

In terms of domain architecture, S1-like spans 1 to 72 (MNKQNLIDVE…TKGRIIYRLR (72 aa)).

Belongs to the IF-1 family. As to quaternary structure, component of the 30S ribosomal translation pre-initiation complex which assembles on the 30S ribosome in the order IF-2 and IF-3, IF-1 and N-formylmethionyl-tRNA(fMet); mRNA recruitment can occur at any time during PIC assembly.

The protein localises to the plastid. It is found in the chloroplast. Its function is as follows. One of the essential components for the initiation of protein synthesis. Stabilizes the binding of IF-2 and IF-3 on the 30S subunit to which N-formylmethionyl-tRNA(fMet) subsequently binds. Helps modulate mRNA selection, yielding the 30S pre-initiation complex (PIC). Upon addition of the 50S ribosomal subunit IF-1, IF-2 and IF-3 are released leaving the mature 70S translation initiation complex. This is Translation initiation factor IF-1, chloroplastic from Cycas taitungensis (Prince sago).